The chain runs to 485 residues: MNEYPKKRKRKTLHPSRYSDSSGISRIADGVSGIFSDHCYSVCSMRQPDLKYFDNKDDDSDPETANDLPKFADGTKARNRNQSYLVPSPVLRILDHTVFSTEKSTEVEICDEECASPESVHQHTQEESPIEVHTSEDVPIAVEVHAISEDYDIEAENNSSESLQDQADEEPPAKLCKILDKGQALNVTAQQKWPLLRANSSGLYKCELCEFNSKYFSDLKQHVILKHKRTDSNVCRVCKESFSTNMLLIEHAKLHEEDPYICKYCDYKTVIFENLSQHIADTHFSDHLYWCEQCDVQFSSSSELYLHFQEHSRDEQYLCQFCEHETGDPEDLHSHVVNEHARRLIELSDKCGSGGHGQCSLLSKITFDKCKNFFVCQVCGFRSRLHTNVNRHVAIEHTKIFPHVCDDCGKGFSSMLEYCKHLNSHLSEGIYLCQYCEYSTGQIDDLKIHLDFKHSADLPHKCSECLMRFGNERDLLGHLQVHETT.

A compositionally biased stretch (basic residues) spans 1–14 (MNEYPKKRKRKTLH). Disordered stretches follow at residues 1 to 23 (MNEY…DSSG) and 54 to 80 (DNKD…ARNR). Ser60 is modified (phosphoserine). Residue Lys76 forms a Glycyl lysine isopeptide (Lys-Gly) (interchain with G-Cter in SUMO2) linkage. Residue Ser88 is modified to Phosphoserine. Positions 115-136 (ASPESVHQHTQEESPIEVHTSE) are disordered. Glycyl lysine isopeptide (Lys-Gly) (interchain with G-Cter in SUMO2) cross-links involve residues Lys177, Lys181, and Lys226. 8 C2H2-type zinc fingers span residues 204–227 (YKCE…ILKH), 233–255 (NVCR…AKLH), 260–283 (YICK…ADTH), 289–311 (YWCE…FQEH), 374–397 (FVCQ…AIEH), 403–425 (HVCD…LNSH), 431–454 (YLCQ…DFKH), and 460–482 (HKCS…LQVH). The interaction with CTNNA2 stretch occupies residues 371–455 (KNFFVCQVCG…LKIHLDFKHS (85 aa)).

The protein belongs to the krueppel C2H2-type zinc-finger protein family. Interacts with CTNNA2.

The protein localises to the nucleus. Binds DNA and may function as a transcriptional repressor. The chain is Zinc finger protein 639 (Znf639) from Mus musculus (Mouse).